The sequence spans 1982 residues: Ras guanine nucleotide exchange factor V (1982 aa).

LRR repeat units follow at residues 1–26 (MGNI…SLEG), 47–68 (LTQL…ITNL), 69–94 (SNLS…PFKP), 105–128 (NENL…VFVL), 130–151 (NLKQ…LCGG), 164–187 (ACQL…IGDQ), 188–210 (LTTL…SFSN), 212–234 (VSLT…LCTL), 236–257 (KLVH…HTLG), 261–284 (LPSL…ILEI), 286–307 (SLRV…IGNL), 308–330 (LNLN…IGEL), 331–352 (INLR…EFSK), 354–376 (SKLN…LHSL), and 378–399 (QLLR…LIKS). The Extracellular portion of the chain corresponds to 1–1831 (MGNINSICLN…IANAFYELRN (1831 aa)). Disordered regions lie at residues 414–436 (YGST…STHG), 457–532 (NQIN…NKKQ), and 615–654 (NNSG…RRGS). Low complexity-rich tracts occupy residues 415–436 (GSTM…STHG) and 457–495 (NQIN…TPNG). Residues 443-466 (DILLSSVTLNNSILNQINNNNNNN) form an LRR 16 repeat. Residues 506-520 (LTISRSLFRGNSSNL) show a composition bias toward polar residues. Positions 515–567 (GNSSNLESEKEDFINKKQQQQQQQQQQQQQQQQQQQQQQQQQQQQQQQQQQLG) form a coiled coil. An LRR 17 repeat occupies 592 to 615 (EDDIQKMQLGLEALSNLETSIGSN). Gly residues predominate over residues 616–642 (NSGGGDSMNGSGGNINNSGGSGSGCGT). 2 LRR repeats span residues 657-684 (LPPT…VMSG) and 773-796 (HSNL…LSSS). 2 disordered regions span residues 756 to 778 (QSST…NLSQ) and 807 to 829 (LQFQ…SNQP). The GBD/FH3 domain maps to 832–1236 (TIVPSFSKFK…QIKYSIDRYG (405 aa)). 4 LRR repeats span residues 979–1003 (LLGI…GYCL), 1075–1100 (SPYV…VFKI), 1239–1263 (VPAI…RWVD), and 1689–1712 (VQNM…FVDL). In terms of domain architecture, N-terminal Ras-GEF spans 1595 to 1717 (KDRRVSSVTL…LFVDLSTKSY (123 aa)). One can recognise a Ras-GEF domain in the interval 1747–1974 (DEIEIARQLS…YEMSLSAEPR (228 aa)). A helical membrane pass occupies residues 1832–1848 (YHLLMAIISGLNASPVL). Residues 1849 to 1982 (RLKYTKGKLS…PRNAERYDIQ (134 aa)) are Cytoplasmic-facing. LRR repeat units follow at residues 1865 to 1888 (LDTL…LAAA) and 1917 to 1941 (RINF…LFPY).

The protein resides in the membrane. In terms of biological role, promotes the exchange of Ras-bound GDP by GTP. In Dictyostelium discoideum (Social amoeba), this protein is Ras guanine nucleotide exchange factor V (gefV).